The sequence spans 238 residues: Ribosomal RNA small subunit methyltransferase G (238 aa).

S-adenosyl-L-methionine is bound by residues glycine 78, phenylalanine 83, 129-130, and arginine 148; that span reads AE. The tract at residues 217-238 is disordered; sequence KKKETPKKYPRKAGTPAKSPIK.

The protein belongs to the methyltransferase superfamily. RNA methyltransferase RsmG family.

It is found in the cytoplasm. Specifically methylates the N7 position of a guanine in 16S rRNA. The protein is Ribosomal RNA small subunit methyltransferase G of Lactococcus lactis subsp. cremoris (strain MG1363).